The primary structure comprises 278 residues: MACSNWVFTRNFQGALPLLSFDERVQYAVWQHERGTHDHIQGVIQLKKKARFSTVKEIIGGNPHVEKMKGTIEEASAYVQKEETRVAGPWSYGDLLKRGSHRRKTMERYLEDPEEMQLKDPDTALRCNAKRLKEDFMKEKTKLQLRPWQKELHDLILTEPDDRTIIWVYGPDGGEGKSMFAKELIKYGWFYTAGGKTQDILYMYAQDPERNIAFDVPRCSSEMMNYQAMEMMKNRCFASTKYRSVDLCCNKNVHLVVFANVAYDPTKISEDRIVIINC.

The 95-residue stretch at 1-95 folds into the CRESS-DNA virus Rep endonuclease domain; sequence MACSNWVFTR…VAGPWSYGDL (95 aa). The short motif at 8–11 is the RCR-1 element; that stretch reads FTRN. Glu-33 and His-39 together coordinate a divalent metal cation. An RCR-2 motif is present at residues 39-41; sequence HIQ. A Nuclear localization signal motif is present at residues 48–69; that stretch reads KKARFSTVKEIIGGNPHVEKMK. Tyr-78 serves as the catalytic For DNA cleavage activity. Residues 78–81 carry the RCR-3 motif; sequence YVQK. Residue Glu-83 participates in a divalent metal cation binding. A Nuclear localization signal motif is present at residues 95 to 101; it reads LLKRGSH. Residue 176-178 participates in ATP binding; the sequence is GKS.

This sequence belongs to the nanoviridea/circoviridae replication-associated protein family. Homooligomer (Potential). Rep binds to repeated DNA motifs (iterons). Mg(2+) serves as cofactor. Mn(2+) is required as a cofactor.

It is found in the host nucleus. It carries out the reaction ATP + H2O = ADP + phosphate + H(+). In terms of biological role, initiates and terminates the replication only of its own subviral DNA molecule. The closed circular ssDNA genome is first converted to a superhelical dsDNA. Rep binds a specific hairpin at the genome origin of replication. Introduces an endonucleolytic nick within the intergenic region of the genome, thereby initiating the rolling circle replication (RCR). Following cleavage, binds covalently to the 5'-phosphate of DNA as a tyrosyl ester. The cleavage gives rise to a free 3'-OH that serves as a primer for the cellular DNA polymerase. The polymerase synthesizes the (+) strand DNA by rolling circle mechanism. After one round of replication, a Rep-catalyzed nucleotidyl transfer reaction releases a circular single-stranded virus genome, thereby terminating the replication. Displays origin-specific DNA cleavage, nucleotidyl transferase, ATPase and helicase activities. This chain is Para-Rep C1 (C1), found in Faba bean necrotic yellows C1 alphasatellite (FBNYC1A).